A 150-amino-acid chain; its full sequence is Single-stranded DNA-binding protein rim1, mitochondrial (150 aa).

The N-terminal 22 residues, 1–22 (MLFLKSSRAFSKRLFSSSTVRY), are a transit peptide targeting the mitochondrion. Positions 25–125 (IQRLTLTGNL…HVSADVLFYP (101 aa)) constitute an SSB domain. Positions 127–150 (NKNGDESGEETHPELDADPMINSF) are disordered. Residues 128-141 (KNGDESGEETHPEL) show a composition bias toward basic and acidic residues.

The protein resides in the mitochondrion. Its function is as follows. This protein binds preferentially and cooperatively to ss-DNA. Involved in mitochondrial DNA replication. This chain is Single-stranded DNA-binding protein rim1, mitochondrial (rim1), found in Schizosaccharomyces pombe (strain 972 / ATCC 24843) (Fission yeast).